The following is a 336-amino-acid chain: Meiotically up-regulated gene 33 protein (336 aa).

The segment at 232 to 336 is disordered; that stretch reads ISEDDGLKRG…KPSRFSWGRS (105 aa). Residues 250 to 262 are compositionally biased toward polar residues; it reads TFSNDSRSLSSYA.

Its subcellular location is the cytoplasm. Its function is as follows. Has a role in meiosis. The protein is Meiotically up-regulated gene 33 protein (mug33) of Schizosaccharomyces pombe (strain 972 / ATCC 24843) (Fission yeast).